The sequence spans 679 residues: Enzymatic polyprotein (679 aa).

Residues 40–130 (LHCFVDTGAS…LYEPFIQFTD (91 aa)) form a protease region. Asp-45 is an active-site residue. The 181-residue stretch at 272 to 452 (LKVIKPSKSP…KKINFLGLEI (181 aa)) folds into the Reverse transcriptase domain.

Belongs to the caulimoviridae enzymatic polyprotein family.

The catalysed reaction is DNA(n) + a 2'-deoxyribonucleoside 5'-triphosphate = DNA(n+1) + diphosphate. Encodes for at least two polypeptides: protease (PR) and reverse transcriptase (RT). The protease processes the polyprotein in cis. Reverse transcriptase is multifunctional enzyme that converts the viral RNA genome into dsDNA in viral cytoplasmic capsids. This enzyme displays a DNA polymerase activity that can copy either DNA or RNA templates, and a ribonuclease H (RNase H) activity that cleaves the RNA strand of RNA-DNA heteroduplexes in a partially processive 3'- to 5'-endonucleasic mode. Neo-synthesized pregenomic RNA (pgRNA) are encapsidated, and reverse-transcribed inside the nucleocapsid. Partial (+)DNA is synthesized from the (-)DNA template and generates the relaxed circular DNA (RC-DNA) genome. After budding and infection, the RC-DNA migrates in the nucleus, and is converted into a plasmid-like covalently closed circular DNA (cccDNA). The chain is Enzymatic polyprotein from Arabidopsis thaliana (Mouse-ear cress).